A 1444-amino-acid polypeptide reads, in one-letter code: Probable serine/threonine-protein kinase irlC (1444 aa).

The segment at 335 to 370 is disordered; the sequence is TLINNNNNNNNNNNNNNNNNNNNNNNNNNNNNNNSK. The span at 338-368 shows a compositional bias: low complexity; it reads NNNNNNNNNNNNNNNNNNNNNNNNNNNNNNN. The SWIM-type zinc-finger motif lies at 495–529; the sequence is FTFYLSFGEIFTCSCEDYKREFSCKHMFFILLNYY. Residues 584-613 show a composition bias toward low complexity; sequence TSPFQSINNNNNNNLNNNNNNNLNNNNNNE. 2 disordered regions span residues 584 to 619 and 864 to 938; these read TSPFQSINNNNNNNLNNNNNNNLNNNNNNENENKFK and QKEK…ITPI. Coiled-coil stretches lie at residues 593 to 620 and 847 to 879; these read NNNNNLNNNNNNNLNNNNNNENENKFKE and IKAEQYLLEQELLEKKKQKEKKKQKQKQSKSKI. Residues 864 to 876 show a composition bias toward basic residues; the sequence is QKEKKKQKQKQSK. The span at 885 to 937 shows a compositional bias: low complexity; it reads SSSSSSSSSPSTSNTTITSTTPTTTTTTTTTTTPTTTTTTTTTSSPKQKPITP. The 266-residue stretch at 981 to 1246 folds into the Protein kinase domain; sequence RKEENVLGRG…IEKILLHPFF (266 aa). ATP contacts are provided by residues 987–995 and Lys1010; that span reads LGRGSNGTL. The active-site Proton acceptor is the Asp1116. Positions 1279–1444 constitute a KEN domain; it reads NYQEINLKNN…LIYFNDLIIK (166 aa).

This sequence belongs to the protein kinase superfamily. Ser/Thr protein kinase family.

It catalyses the reaction L-seryl-[protein] + ATP = O-phospho-L-seryl-[protein] + ADP + H(+). The enzyme catalyses L-threonyl-[protein] + ATP = O-phospho-L-threonyl-[protein] + ADP + H(+). The sequence is that of Probable serine/threonine-protein kinase irlC (irlC) from Dictyostelium discoideum (Social amoeba).